We begin with the raw amino-acid sequence, 161 residues long: Disulfide bond formation protein B (161 aa).

The Cytoplasmic segment spans residues 1–8; that stretch reads MQANSRTY. The helical transmembrane segment at 9 to 25 threads the bilayer; it reads FLLIAIVSFAMVGAALY. At 26-43 the chain is on the periplasmic side; the sequence is MQYAENLQPCPLCIMQRF. Cysteine 35 and cysteine 38 are joined by a disulfide. A helical transmembrane segment spans residues 44-58; it reads AFIGIGIFSLLAVIA. The Cytoplasmic portion of the chain corresponds to 59–63; sequence QNTRT. The chain crosses the membrane as a helical span at residues 64 to 81; the sequence is LWQGLGMLSGVGGIAVAG. Residues 82-136 are Periplasmic-facing; that stretch reads YQVALLMNPKASCGIDPLENWVNSLPTAKLLPQVFYSDGLCTAPTPPILGLSIPA. An intrachain disulfide couples cysteine 94 to cysteine 122. The chain crosses the membrane as a helical span at residues 137-155; that stretch reads WSLIWLLILTLTLAVGLIR. Topologically, residues 156–161 are cytoplasmic; the sequence is REKHFR.

Belongs to the DsbB family.

Its subcellular location is the cell inner membrane. Its function is as follows. Required for disulfide bond formation in some periplasmic proteins. Acts by oxidizing the DsbA protein. In Cupriavidus metallidurans (strain ATCC 43123 / DSM 2839 / NBRC 102507 / CH34) (Ralstonia metallidurans), this protein is Disulfide bond formation protein B.